The primary structure comprises 151 residues: MEREGVDYHYVNREAIWKGIAAGNFLEHTEFLGNIYGTSKTAVNTAAINNRICVMDLNIDGVRSFKNTYLMPYSVYIRPTSLKMVETKLRCRNTEANDEIHRRVILAKTDMDEANEAGLFDTIIIEDDVNLAYSKLIQILQDRIRMYFNTN.

The region spanning 1-141 (MEREGVDYHY…AYSKLIQILQ (141 aa)) is the Guanylate kinase-like domain.

Belongs to the guanylate kinase family.

The polypeptide is Guanylate kinase homolog (Vaccinia virus (strain Copenhagen) (VACV)).